The primary structure comprises 217 residues: 3,4-dihydroxy-2-butanone 4-phosphate synthase (217 aa).

Residues 37 to 38 (RE), Asp-42, 150 to 154 (RGGHT), and Glu-174 each bind D-ribulose 5-phosphate. Glu-38 lines the Mg(2+) pocket. Residue His-153 participates in Mg(2+) binding.

The protein belongs to the DHBP synthase family. Homodimer. Mg(2+) is required as a cofactor. Requires Mn(2+) as cofactor.

The catalysed reaction is D-ribulose 5-phosphate = (2S)-2-hydroxy-3-oxobutyl phosphate + formate + H(+). The protein operates within cofactor biosynthesis; riboflavin biosynthesis; 2-hydroxy-3-oxobutyl phosphate from D-ribulose 5-phosphate: step 1/1. Its function is as follows. Catalyzes the conversion of D-ribulose 5-phosphate to formate and 3,4-dihydroxy-2-butanone 4-phosphate. The chain is 3,4-dihydroxy-2-butanone 4-phosphate synthase from Klebsiella pneumoniae subsp. pneumoniae (strain ATCC 700721 / MGH 78578).